The following is a 172-amino-acid chain: ATP synthase subunit b (172 aa).

The helical transmembrane segment at 27–47 (LAIVIFGLYKFLPPFVGGILE) threads the bilayer.

The protein belongs to the ATPase B chain family. In terms of assembly, F-type ATPases have 2 components, F(1) - the catalytic core - and F(0) - the membrane proton channel. F(1) has five subunits: alpha(3), beta(3), gamma(1), delta(1), epsilon(1). F(0) has four main subunits: a(1), b(1), b'(1) and c(10-14). The alpha and beta chains form an alternating ring which encloses part of the gamma chain. F(1) is attached to F(0) by a central stalk formed by the gamma and epsilon chains, while a peripheral stalk is formed by the delta, b and b' chains.

It localises to the cellular thylakoid membrane. Functionally, f(1)F(0) ATP synthase produces ATP from ADP in the presence of a proton or sodium gradient. F-type ATPases consist of two structural domains, F(1) containing the extramembraneous catalytic core and F(0) containing the membrane proton channel, linked together by a central stalk and a peripheral stalk. During catalysis, ATP synthesis in the catalytic domain of F(1) is coupled via a rotary mechanism of the central stalk subunits to proton translocation. Component of the F(0) channel, it forms part of the peripheral stalk, linking F(1) to F(0). This is ATP synthase subunit b from Prochlorococcus marinus (strain MIT 9303).